Consider the following 592-residue polypeptide: BTB/POZ domain-containing protein At5g03250 (592 aa).

A BTB domain is found at 28–98 (SDVTIEVGDM…CYGVKIELTA (71 aa)). The region spanning 217-502 (DWWFDDASFL…VQVLFFEQLR (286 aa)) is the NPH3 domain. The residue at position 443 (Y443) is a Phosphotyrosine.

It belongs to the NPH3 family.

The protein operates within protein modification; protein ubiquitination. Its function is as follows. May act as a substrate-specific adapter of an E3 ubiquitin-protein ligase complex (CUL3-RBX1-BTB) which mediates the ubiquitination and subsequent proteasomal degradation of target proteins. In Arabidopsis thaliana (Mouse-ear cress), this protein is BTB/POZ domain-containing protein At5g03250.